We begin with the raw amino-acid sequence, 183 residues long: Peptidyl-prolyl cis-trans isomerase H (183 aa).

The PPIase cyclophilin-type domain maps to 19–182; it reads FFDVALGGEP…QDVVIIQCGE (164 aa).

It belongs to the cyclophilin-type PPIase family. PPIase H subfamily.

The protein localises to the nucleus. The catalysed reaction is [protein]-peptidylproline (omega=180) = [protein]-peptidylproline (omega=0). Its function is as follows. PPIases accelerate the folding of proteins. It catalyzes the cis-trans isomerization of proline imidic peptide bonds in oligopeptides. This Emericella nidulans (strain FGSC A4 / ATCC 38163 / CBS 112.46 / NRRL 194 / M139) (Aspergillus nidulans) protein is Peptidyl-prolyl cis-trans isomerase H (cyp3).